A 459-amino-acid chain; its full sequence is tRNA modification GTPase MnmE (459 aa).

Residues arginine 20, glutamate 85, and arginine 124 each coordinate (6S)-5-formyl-5,6,7,8-tetrahydrofolate. The region spanning 221–380 is the TrmE-type G domain; the sequence is GLSTVIIGRP…LEMAIQSLFF (160 aa). Asparagine 231 serves as a coordination point for K(+). Residues 231-236, 250-256, and 275-278 contribute to the GTP site; these read NVGKSS, TDIPGTT, and DTAG. Serine 235 is a binding site for Mg(2+). Threonine 250, isoleucine 252, and threonine 255 together coordinate K(+). Residue threonine 256 coordinates Mg(2+). Lysine 459 lines the (6S)-5-formyl-5,6,7,8-tetrahydrofolate pocket.

The protein belongs to the TRAFAC class TrmE-Era-EngA-EngB-Septin-like GTPase superfamily. TrmE GTPase family. In terms of assembly, homodimer. Heterotetramer of two MnmE and two MnmG subunits. K(+) is required as a cofactor.

It is found in the cytoplasm. Its function is as follows. Exhibits a very high intrinsic GTPase hydrolysis rate. Involved in the addition of a carboxymethylaminomethyl (cmnm) group at the wobble position (U34) of certain tRNAs, forming tRNA-cmnm(5)s(2)U34. This chain is tRNA modification GTPase MnmE, found in Bacillus pumilus (strain SAFR-032).